Here is a 277-residue protein sequence, read N- to C-terminus: Large ribosomal subunit protein uL2 (277 aa).

The disordered stretch occupies residues 222-277; it reads GVAMNPVDHPHGGGEGRTSGGRHPVSPWGKPTKGKRTRSNKATDKFIMRSRHQRKK.

The protein belongs to the universal ribosomal protein uL2 family. Part of the 50S ribosomal subunit. Forms a bridge to the 30S subunit in the 70S ribosome.

Its function is as follows. One of the primary rRNA binding proteins. Required for association of the 30S and 50S subunits to form the 70S ribosome, for tRNA binding and peptide bond formation. It has been suggested to have peptidyltransferase activity; this is somewhat controversial. Makes several contacts with the 16S rRNA in the 70S ribosome. This is Large ribosomal subunit protein uL2 from Bartonella bacilliformis (strain ATCC 35685 / KC583 / Herrer 020/F12,63).